A 120-amino-acid chain; its full sequence is MKTEEIIKSIEAEYLKSDLPIIHVGDTIRVGVRIVEGDKERIQPYEGIVIAKRHGGINETITVRKVFQGVGVERVFLLHSPRVASIKIIRRGKVRRAKLYYLRDRVGKATRVQERFDRPL.

This sequence belongs to the bacterial ribosomal protein bL19 family.

This protein is located at the 30S-50S ribosomal subunit interface and may play a role in the structure and function of the aminoacyl-tRNA binding site. This chain is Large ribosomal subunit protein bL19, found in Microcystis aeruginosa (strain NIES-843 / IAM M-2473).